A 566-amino-acid chain; its full sequence is OTU domain-containing protein 5 (566 aa).

Disordered stretches follow at residues 1 to 117 and 146 to 175; these read MTIL…GDAL and PGHS…GAGY. Residues 11–30 are compositionally biased toward pro residues; the sequence is PPDADPANEPPPPGPLPPAP. Gly residues predominate over residues 32 to 47; it reads RGGGVGVGGGGTGVGG. The span at 63–75 shows a compositional bias: pro residues; the sequence is ASPPPQGPLPGPP. Ser-64 is subject to Phosphoserine. A compositionally biased stretch (low complexity) spans 84–97; that stretch reads AVPPGAVAGPRPQQ. The span at 105 to 115 shows a compositional bias: gly residues; sequence GPGGPGGGPGD. A Phosphoserine modification is found at Ser-165. A Phosphotyrosine modification is found at Tyr-175. At Ser-177 the chain carries Phosphoserine. Position 195 is a phosphothreonine (Thr-195). Positions 213 to 336 constitute an OTU domain; sequence FIIKQMKEDG…NIHYNSVVNP (124 aa). The segment at 218–224 is cys-loop; that stretch reads MKEDGAC. Residue Asp-221 is part of the active site. The active-site Nucleophile is the Cys-224. The tract at residues 273–283 is variable-loop; sequence KRKNNCHGNHI. Ser-323 is subject to Phosphoserine. The tract at residues 324–329 is his-loop; it reads YHRNIH. His-329 is a catalytic residue. Residues Ser-332 and Ser-370 each carry the phosphoserine modification. A disordered region spans residues 413–497; it reads ARQVRGPSQP…PGTSSQFSAG (85 aa). Low complexity-rich tracts occupy residues 425–438 and 445–457; these read ASAT…AASS and SRSP…ASSP. Ser-447 bears the Phosphoserine mark. Thr-502 carries the phosphothreonine modification. Ser-503 bears the Phosphoserine mark.

Belongs to the peptidase C85 family. As to quaternary structure, interacts with TRAF3. In terms of processing, phosphorylation at Ser-177 is required for deubiquitinating activity. Phosphorylation at Ser-323, Ser-332 and Ser-503 by MTOR promotes its activity.

It localises to the nucleus. The catalysed reaction is Thiol-dependent hydrolysis of ester, thioester, amide, peptide and isopeptide bonds formed by the C-terminal Gly of ubiquitin (a 76-residue protein attached to proteins as an intracellular targeting signal).. With respect to regulation, inhibited by N-ethyl-maleimide (NEM). Functionally, deubiquitinating enzyme that functions as a negative regulator of the innate immune system. Has peptidase activity towards 'Lys-48'- and 'Lys-63'-linked polyubiquitin chains. Can also cleave 'Lys-11'-linked ubiquitin chains (in vitro). Acts via TRAF3 deubiquitination and subsequent suppression of type I interferon (IFN) production. Controls neuroectodermal differentiation through cleaving 'Lys-48'-linked ubiquitin chains to counteract degradation of select chromatin regulators such as ARID1A, HDAC2 and HCF1. Acts as a positive regulator of mTORC1 and mTORC2 signaling following phosphorylation by MTOR: acts by mediating deubiquitination of BTRC, leading to its stability. The polypeptide is OTU domain-containing protein 5 (Rattus norvegicus (Rat)).